The following is a 353-amino-acid chain: Chorismate synthase (353 aa).

Arginine 48 provides a ligand contact to NADP(+). FMN is bound by residues 125 to 127, 238 to 239, glycine 278, 293 to 297, and arginine 319; these read RSS, NA, and KPTSS.

Belongs to the chorismate synthase family. Homotetramer. It depends on FMNH2 as a cofactor.

The catalysed reaction is 5-O-(1-carboxyvinyl)-3-phosphoshikimate = chorismate + phosphate. It participates in metabolic intermediate biosynthesis; chorismate biosynthesis; chorismate from D-erythrose 4-phosphate and phosphoenolpyruvate: step 7/7. Functionally, catalyzes the anti-1,4-elimination of the C-3 phosphate and the C-6 proR hydrogen from 5-enolpyruvylshikimate-3-phosphate (EPSP) to yield chorismate, which is the branch point compound that serves as the starting substrate for the three terminal pathways of aromatic amino acid biosynthesis. This reaction introduces a second double bond into the aromatic ring system. The chain is Chorismate synthase from Buchnera aphidicola subsp. Cinara cedri (strain Cc).